Consider the following 334-residue polypeptide: Holliday junction branch migration complex subunit RuvB (334 aa).

The interval 4–184 (ADRLIQPQLQ…FGIPLRLEFY (181 aa)) is large ATPase domain (RuvB-L). ATP-binding positions include Arg-24, Gly-65, Lys-68, Thr-69, Thr-70, 131-133 (EDY), Arg-174, Tyr-184, and Arg-221. Thr-69 serves as a coordination point for Mg(2+). The tract at residues 185–255 (NVKDLSTIVT…VAELALNLLD (71 aa)) is small ATPAse domain (RuvB-S). A head domain (RuvB-H) region spans residues 258–334 (GEGFDYMDRK…YVHFGMIKPE (77 aa)). Arg-294, Arg-313, and Arg-318 together coordinate DNA.

Belongs to the RuvB family. Homohexamer. Forms an RuvA(8)-RuvB(12)-Holliday junction (HJ) complex. HJ DNA is sandwiched between 2 RuvA tetramers; dsDNA enters through RuvA and exits via RuvB. An RuvB hexamer assembles on each DNA strand where it exits the tetramer. Each RuvB hexamer is contacted by two RuvA subunits (via domain III) on 2 adjacent RuvB subunits; this complex drives branch migration. In the full resolvosome a probable DNA-RuvA(4)-RuvB(12)-RuvC(2) complex forms which resolves the HJ.

Its subcellular location is the cytoplasm. It carries out the reaction ATP + H2O = ADP + phosphate + H(+). Functionally, the RuvA-RuvB-RuvC complex processes Holliday junction (HJ) DNA during genetic recombination and DNA repair, while the RuvA-RuvB complex plays an important role in the rescue of blocked DNA replication forks via replication fork reversal (RFR). RuvA specifically binds to HJ cruciform DNA, conferring on it an open structure. The RuvB hexamer acts as an ATP-dependent pump, pulling dsDNA into and through the RuvAB complex. RuvB forms 2 homohexamers on either side of HJ DNA bound by 1 or 2 RuvA tetramers; 4 subunits per hexamer contact DNA at a time. Coordinated motions by a converter formed by DNA-disengaged RuvB subunits stimulates ATP hydrolysis and nucleotide exchange. Immobilization of the converter enables RuvB to convert the ATP-contained energy into a lever motion, pulling 2 nucleotides of DNA out of the RuvA tetramer per ATP hydrolyzed, thus driving DNA branch migration. The RuvB motors rotate together with the DNA substrate, which together with the progressing nucleotide cycle form the mechanistic basis for DNA recombination by continuous HJ branch migration. Branch migration allows RuvC to scan DNA until it finds its consensus sequence, where it cleaves and resolves cruciform DNA. The polypeptide is Holliday junction branch migration complex subunit RuvB (Shewanella oneidensis (strain ATCC 700550 / JCM 31522 / CIP 106686 / LMG 19005 / NCIMB 14063 / MR-1)).